The chain runs to 273 residues: Trypsin-6 (273 aa).

The first 22 residues, 1-22 (MLSKFTAILLAVHIALFACALT), serve as a signal peptide directing secretion. Residues 23–46 (QAEKRHKLTRPAFHPNAPYLAGKR) constitute a propeptide, activation peptide. In terms of domain architecture, Peptidase S1 spans 47-272 (IVGGFVIDIS…VRDWIRETSG (226 aa)). Cysteines 72 and 88 form a disulfide. Catalysis depends on charge relay system residues His87 and Asp132. 2 disulfide bridges follow: Cys197–Cys213 and Cys224–Cys248. Residue Ser228 is the Charge relay system of the active site.

The protein belongs to the peptidase S1 family. In terms of tissue distribution, expressed in the midgut. Expression levels drop a few hours after blood feeding and pick up again 28 hours later.

It localises to the secreted. The catalysed reaction is Preferential cleavage: Arg-|-Xaa, Lys-|-Xaa.. Its function is as follows. Constitutive trypsin that is expressed 2 days after emergence, coinciding with host seeking behavior of the female. The polypeptide is Trypsin-6 (TRYP6) (Anopheles gambiae (African malaria mosquito)).